Reading from the N-terminus, the 335-residue chain is Pregnancy-specific beta-1-glycoprotein 11 (335 aa).

The first 34 residues, 1 to 34, serve as a signal peptide directing secretion; the sequence is MGPLSAPPCTEHIKWKGLLLTALLLNFWNLPTTA. Residues 35–144 enclose the Ig-like V-type domain; that stretch reads QVMIEAQPPK…TGYFTFTLYL (110 aa). Residues N61, N104, and N111 are each glycosylated (N-linked (GlcNAc...) asparagine). The Cell attachment site signature appears at 127-129; the sequence is RGD. 2 Ig-like C2-type domains span residues 147-234 and 242-317; these read PKPS…VTLN and PRIF…TSLT. 2 disulfides stabilise this stretch: C169-C217 and C261-C301.

The protein belongs to the immunoglobulin superfamily. CEA family.

The protein localises to the secreted. This chain is Pregnancy-specific beta-1-glycoprotein 11 (PSG11), found in Homo sapiens (Human).